We begin with the raw amino-acid sequence, 376 residues long: D-alanine--D-alanine ligase (376 aa).

Residues 155 to 361 enclose the ATP-grasp domain; it reads KIIFEKAGIP…YPELIEKLID (207 aa). An ATP-binding site is contributed by 188-243; the sequence is EEKFSYPVFVKPSNAGSSVGVSKAHDKNELKEALIYAARYDRKVLIEEFINGREVE. D314, E328, and N330 together coordinate Mg(2+).

This sequence belongs to the D-alanine--D-alanine ligase family. Requires Mg(2+) as cofactor. Mn(2+) serves as cofactor.

Its subcellular location is the cytoplasm. The enzyme catalyses 2 D-alanine + ATP = D-alanyl-D-alanine + ADP + phosphate + H(+). The protein operates within cell wall biogenesis; peptidoglycan biosynthesis. Cell wall formation. This is D-alanine--D-alanine ligase from Acetivibrio thermocellus (strain ATCC 27405 / DSM 1237 / JCM 9322 / NBRC 103400 / NCIMB 10682 / NRRL B-4536 / VPI 7372) (Clostridium thermocellum).